The following is a 493-amino-acid chain: Ribosomal protein uS12 methylthiotransferase RimO (493 aa).

Positions 5-121 constitute an MTTase N-terminal domain; sequence RTVALVTLGC…ISDRLQTILN (117 aa). [4Fe-4S] cluster contacts are provided by C14, C50, and C84. The segment at 153–177 is disordered; sequence LPGHGPTDLPEGVAPASGPRAPLRR. The Radical SAM core domain maps to 179 to 410; it reads LDGSPVASVK…RLAEELVSQR (232 aa). Residues C193, C197, and C200 each contribute to the [4Fe-4S] cluster site. One can recognise a TRAM domain in the interval 412-482; it reads DERVGATVRV…GVDLVAEPLL (71 aa).

The protein belongs to the methylthiotransferase family. RimO subfamily. [4Fe-4S] cluster is required as a cofactor.

It is found in the cytoplasm. The catalysed reaction is L-aspartate(89)-[ribosomal protein uS12]-hydrogen + (sulfur carrier)-SH + AH2 + 2 S-adenosyl-L-methionine = 3-methylsulfanyl-L-aspartate(89)-[ribosomal protein uS12]-hydrogen + (sulfur carrier)-H + 5'-deoxyadenosine + L-methionine + A + S-adenosyl-L-homocysteine + 2 H(+). In terms of biological role, catalyzes the methylthiolation of an aspartic acid residue of ribosomal protein uS12. The sequence is that of Ribosomal protein uS12 methylthiotransferase RimO from Streptomyces coelicolor (strain ATCC BAA-471 / A3(2) / M145).